Consider the following 369-residue polypeptide: Phenylalanine--tRNA ligase alpha subunit (369 aa).

Position 269 (glutamate 269) interacts with Mg(2+).

It belongs to the class-II aminoacyl-tRNA synthetase family. Phe-tRNA synthetase alpha subunit type 1 subfamily. As to quaternary structure, tetramer of two alpha and two beta subunits. The cofactor is Mg(2+).

The protein resides in the cytoplasm. It carries out the reaction tRNA(Phe) + L-phenylalanine + ATP = L-phenylalanyl-tRNA(Phe) + AMP + diphosphate + H(+). In Brucella canis (strain ATCC 23365 / NCTC 10854 / RM-666), this protein is Phenylalanine--tRNA ligase alpha subunit.